The sequence spans 132 residues: Small ribosomal subunit protein bS6 (132 aa).

Residues 99–132 form a disordered region; that stretch reads ASPMVKAKDERRGDRREDFANETADDADAGDSEE. Positions 104–117 are enriched in basic and acidic residues; that stretch reads KAKDERRGDRREDF. Acidic residues predominate over residues 121–132; sequence TADDADAGDSEE.

It belongs to the bacterial ribosomal protein bS6 family.

Binds together with bS18 to 16S ribosomal RNA. The protein is Small ribosomal subunit protein bS6 of Serratia proteamaculans (strain 568).